A 312-amino-acid chain; its full sequence is Olfactory receptor 13J1 (312 aa).

The Extracellular portion of the chain corresponds to 1-25 (MEPLNRTEVSEFFLKGFSGYPALEH). Asparagine 5 carries an N-linked (GlcNAc...) asparagine glycan. The helical transmembrane segment at 26–46 (LLFPLCSAMYLVTLLGNTAIM) threads the bilayer. Over 47–54 (AVSVLDIH) the chain is Cytoplasmic. The chain crosses the membrane as a helical span at residues 55–75 (LHTPVYFFLGNLSTLDICYTP). Residues 76–99 (TFVPLMLVHLLSSRKTISFAVCAI) lie on the Extracellular side of the membrane. Cysteine 97 and cysteine 189 are joined by a disulfide. The chain crosses the membrane as a helical span at residues 100–120 (QMCLSLSTGSTECLLLAITAY). Residues 121-139 (DRYLAICQPLRYHVLMSHR) lie on the Cytoplasmic side of the membrane. The helical transmembrane segment at 140-160 (LCVLLMGAAWVLCLLKSVTEM) threads the bilayer. The Extracellular segment spans residues 161–197 (VISMRLPFCGHHVVSHFTCKILAVLKLACGNTSVSED). N-linked (GlcNAc...) asparagine glycosylation is present at asparagine 191. A helical membrane pass occupies residues 198 to 217 (FLLAGSILLLPVPLAFICLS). At 218-237 (YLLILATILRVPSAARCCKA) the chain is on the cytoplasmic side. The chain crosses the membrane as a helical span at residues 238–258 (FSTCLAHLAVVLLFYGTIIFM). The Extracellular portion of the chain corresponds to 259 to 271 (YLKPKSKEAHISD). A helical membrane pass occupies residues 272 to 292 (EVFTVLYAMVTTMLNPTIYSL). The Cytoplasmic portion of the chain corresponds to 293–312 (RNKEVKEAARKVWGRSRASR).

Belongs to the G-protein coupled receptor 1 family.

Its subcellular location is the cell membrane. In terms of biological role, odorant receptor. In Homo sapiens (Human), this protein is Olfactory receptor 13J1 (OR13J1).